Here is a 562-residue protein sequence, read N- to C-terminus: uncharacterized protein (562 aa).

5 helical membrane-spanning segments follow: residues 4–26, 33–55, 59–78, 90–112, and 159–181; these read VRWI…GTML, GFAI…LGTF, ALLR…YKSG, LAQV…AFAF, and IAAG…VPFA. 2 consecutive RCK C-terminal domains span residues 207–287 and 295–375; these read PKTE…IIGT and LKAI…QVGQ. A run of 6 helical transmembrane segments spans residues 385–402, 406–428, 449–471, 476–498, 505–524, and 539–561; these read IAFL…GLVS, GGIA…CGWL, LGLG…VAIQ, LLVG…FAYH, VITC…VTGA, and VPYA…CTFV.

It belongs to the AAE transporter (TC 2.A.81) family.

It localises to the cell membrane. This is an uncharacterized protein from Bradyrhizobium diazoefficiens (strain JCM 10833 / BCRC 13528 / IAM 13628 / NBRC 14792 / USDA 110).